Consider the following 742-residue polypeptide: MKDDFAEEEEVQSFGYKRFGIQEGTQCTKCKNNWALKFSIILLYVLCALLTITVAILGYKVVEKMDTVTDGMETSRQTYDNKLIAVESDLKKLGDQTGKKALSTNSELSTFRSDILDLRQQLQEITEKTSKNKDMLEKLQANGDSLVDRQSQLKETLQNNSFLITTVNKTLQAYNGYVTNLQQDTSVLQGNLQSQMYSQNVVIMNLNNLNLTQVQQRNLITNLQRSVDDTSLAIQQIKNDFQNLQQVFLQAKKDTDWLKEKVQSLQTLAANNSALAKANNDTLEDMNNQLSSFTGQMDNITTISQANEQSMKDLQDLHKDTENRTAVKFSQLEERFQVFETDIVNIINNISYTAHHLRTLTSNLNDVRTTCTDTLTRHTDDLTSLNNTLVNIRLDSISLRMQQDMMRSRLDTEVANLSVVMEEMKLVDSKHGQLIKNFTILQGPPGPRGPKGDRGSQGPPGPTGNKGQKGEKGEPGPPGPAGERGTIGPVGPPGERGSKGSKGSQGPKGSRGSPGKPGPQGPSGDPGPPGPPGKDGLPGPQGPPGFQGLQGTVGEPGVPGPRGLPGLPGVPGMPGPKGPPGPPGPSGAMEPLALQNEPTPASEVNGCPPHWKNFTDKCYYFSVEKEIFEDAKLFCEDKSSHLVFINSREEQQWIKKQTMGRESHWIGLTDSEQESEWKWLDGTPVDYKNWKAGQPDNWGSGHGPGEDCAGLIYAGQWNDFQCDEINNFICEKEREAVPSSIL.

The Cytoplasmic segment spans residues 1 to 37; sequence MKDDFAEEEEVQSFGYKRFGIQEGTQCTKCKNNWALK. A helical; Signal-anchor for type II membrane protein transmembrane segment spans residues 38–58; sequence FSIILLYVLCALLTITVAILG. Residues 59-742 lie on the Extracellular side of the membrane; it reads YKVVEKMDTV…EREAVPSSIL (684 aa). A coiled-coil region spans residues 104–142; that stretch reads TNSELSTFRSDILDLRQQLQEITEKTSKNKDMLEKLQAN. Residues N159, N168, and N271 are each glycosylated (N-linked (GlcNAc...) asparagine). The stretch at 220-301 forms a coiled coil; that stretch reads ITNLQRSVDD…SFTGQMDNIT (82 aa). Positions 439 to 608 are disordered; that stretch reads TILQGPPGPR…TPASEVNGCP (170 aa). Collagen-like domains lie at 452 to 511 and 527 to 586; these read GDRG…KGSR and GPPG…PGPS. The segment covering 501–514 has biased composition (low complexity); the sequence is SKGSQGPKGSRGSP. Pro residues predominate over residues 516-532; sequence KPGPQGPSGDPGPPGPP. The span at 534–556 shows a compositional bias: low complexity; that stretch reads KDGLPGPQGPPGFQGLQGTVGEP. Over residues 571 to 585 the composition is skewed to pro residues; that stretch reads PGMPGPKGPPGPPGP. 3 disulfide bridges follow: C607/C618, C635/C730, and C708/C722. The region spanning 614 to 731 is the C-type lectin domain; that stretch reads FTDKCYYFSV…CDEINNFICE (118 aa). Ca(2+) contacts are provided by F644, N646, E650, D670, and E674. A carbohydrate is bound by residues K691, Q694, and D696. Residues Q694, D696, N697, E706, D707, N718, D719, and E731 each coordinate Ca(2+). E706 provides a ligand contact to a carbohydrate. N718 and D719 together coordinate a carbohydrate.

As to quaternary structure, the extracellular domain forms a stable trimer. The extracellular domain interacts with fibrillar amyloid-beta peptide. As to expression, highly expressed in lung, spleen, small and large intestine, stomach and brain. Expressed in neonatal microglia.

The protein localises to the membrane. Scavenger receptor that displays several functions associated with host defense. Promotes binding and phagocytosis of Gram-positive, Gram-negative bacteria and yeast. Mediates the recognition, internalization and degradation of oxidatively modified low density lipoprotein (oxLDL) by vascular endothelial cells. Binds to several carbohydrates including Gal-type ligands, D-galactose, L- and D-fucose, GalNAc, T and Tn antigens in a calcium-dependent manner and internalizes specifically GalNAc in nurse-like cells. Also binds to sialyl Lewis X or a trisaccharide and asialo-orosomucoid (ASOR). This is Collectin-12 (Colec12) from Rattus norvegicus (Rat).